Here is a 573-residue protein sequence, read N- to C-terminus: Dihydroxy-acid dehydratase (573 aa).

Cys-62 is a [2Fe-2S] cluster binding site. A Mg(2+)-binding site is contributed by Asp-94. Residue Cys-135 participates in [2Fe-2S] cluster binding. Residues Asp-136 and Lys-137 each contribute to the Mg(2+) site. Lys-137 carries the N6-carboxylysine modification. Cys-212 provides a ligand contact to [2Fe-2S] cluster. Glu-463 lines the Mg(2+) pocket. Residue Ser-489 is the Proton acceptor of the active site.

It belongs to the IlvD/Edd family. In terms of assembly, homodimer. [2Fe-2S] cluster is required as a cofactor. It depends on Mg(2+) as a cofactor.

It catalyses the reaction (2R)-2,3-dihydroxy-3-methylbutanoate = 3-methyl-2-oxobutanoate + H2O. The enzyme catalyses (2R,3R)-2,3-dihydroxy-3-methylpentanoate = (S)-3-methyl-2-oxopentanoate + H2O. It functions in the pathway amino-acid biosynthesis; L-isoleucine biosynthesis; L-isoleucine from 2-oxobutanoate: step 3/4. The protein operates within amino-acid biosynthesis; L-valine biosynthesis; L-valine from pyruvate: step 3/4. Functionally, functions in the biosynthesis of branched-chain amino acids. Catalyzes the dehydration of (2R,3R)-2,3-dihydroxy-3-methylpentanoate (2,3-dihydroxy-3-methylvalerate) into 2-oxo-3-methylpentanoate (2-oxo-3-methylvalerate) and of (2R)-2,3-dihydroxy-3-methylbutanoate (2,3-dihydroxyisovalerate) into 2-oxo-3-methylbutanoate (2-oxoisovalerate), the penultimate precursor to L-isoleucine and L-valine, respectively. This is Dihydroxy-acid dehydratase from Renibacterium salmoninarum (strain ATCC 33209 / DSM 20767 / JCM 11484 / NBRC 15589 / NCIMB 2235).